The following is a 195-amino-acid chain: ATP-dependent Clp protease proteolytic subunit 2 (195 aa).

The active-site Nucleophile is Ser98. His123 is an active-site residue.

This sequence belongs to the peptidase S14 family. In terms of assembly, fourteen ClpP subunits assemble into 2 heptameric rings which stack back to back to give a disk-like structure with a central cavity, resembling the structure of eukaryotic proteasomes.

The protein localises to the cytoplasm. The catalysed reaction is Hydrolysis of proteins to small peptides in the presence of ATP and magnesium. alpha-casein is the usual test substrate. In the absence of ATP, only oligopeptides shorter than five residues are hydrolyzed (such as succinyl-Leu-Tyr-|-NHMec, and Leu-Tyr-Leu-|-Tyr-Trp, in which cleavage of the -Tyr-|-Leu- and -Tyr-|-Trp bonds also occurs).. Its function is as follows. Cleaves peptides in various proteins in a process that requires ATP hydrolysis. Has a chymotrypsin-like activity. Plays a major role in the degradation of misfolded proteins. ClpXP2 is involved in the complete degradation of the Site-2 clipped anti-sigma-W factor RsiW. This results in the release of SigW and the transcription activation of the genes under the control of the sigma-W factor. The protein is ATP-dependent Clp protease proteolytic subunit 2 of Shouchella clausii (strain KSM-K16) (Alkalihalobacillus clausii).